A 140-amino-acid polypeptide reads, in one-letter code: MRHQIAHRKLNRTASHRKAMFANMAASLIEHEQIVTTLPKAKEMAPLMDKLVSLAKKGDLAARRAALSQVRNETAVRKLFDVFGDRYKDRNGGYTRVVKAGFRPGDNAPIAVLELVDRDESAKGAADKARHAAELEAAEG.

The protein belongs to the bacterial ribosomal protein bL17 family. As to quaternary structure, part of the 50S ribosomal subunit. Contacts protein L32.

The polypeptide is Large ribosomal subunit protein bL17 (Hyphomonas neptunium (strain ATCC 15444)).